The sequence spans 2116 residues: Unconventional myosin-VIIb (2116 aa).

The region spanning 65 to 760 is the Myosin motor domain; the sequence is QGVDDMIRLG…QDTLLEVQRS (696 aa). 158-165 provides a ligand contact to ATP; the sequence is GESGAGKT. An actin-binding region spans residues 637 to 659; it reads LDQLMKILTNCQPYFIRCIKPNE. IQ domains are found at residues 745–765, 763–792, 786–815, 814–834, 832–861, and 855–884; these read IFLR…VLDR, LDRA…AAVT, QRRA…GFER, ERLQ…AMRQ, MRQR…AVVV, and KRRA…NAPL. Position 904 is a phosphoserine (serine 904). The interval 916 to 1542 is mediates interaction with ANKS4B; the sequence is EKVFGFLPAM…KKQGLLASEN (627 aa). One can recognise a MyTH4 1 domain in the interval 989 to 1192; that stretch reads HIRRPLRYPL…PTWLELQAVK (204 aa). In terms of domain architecture, FERM 1 spans 1197-1506; sequence IPIQVILATG…EGLKERSIFA (310 aa). A Phosphoserine modification is found at serine 1371. The 67-residue stretch at 1501–1567 folds into the SH3 domain; sequence ERSIFAMALQ…PMACLYTIPT (67 aa). The interval 1501 to 2116 is mediates interaction with CDHR2, CDHR5 and USH1C; sequence ERSIFAMALQ…GSKAPALAST (616 aa). MyTH4 domains lie at 1644 to 1793 and 1790 to 1896; these read YSCE…EAAE and EAAE…KLWL. Position 1645 is a phosphoserine (serine 1645). Positions 1799 to 2102 constitute an FERM 2 domain; that stretch reads ICHKIYFPND…SYVQQLLSAM (304 aa).

This sequence belongs to the TRAFAC class myosin-kinesin ATPase superfamily. Myosin family. As to quaternary structure, part of the IMAC/intermicrovillar adhesion complex/intermicrovillar tip-link complex composed of ANKS4B, MYO7B, USH1C, CDHR2 and CDHR5. Interacts with CDHR2. Interacts with CDHR5. Interacts with USH1C. Interacts with ANKS4B; requires initial interaction with USH1C. Interacts with CALML4; the interaction mediates the association of CALML4 with the IMAC/intermicrovillar adhesion complex.

It localises to the cytoplasm. Its subcellular location is the cytoskeleton. The protein resides in the cell projection. The protein localises to the microvillus. In terms of biological role, myosins are actin-based motor molecules with ATPase activity. Their highly divergent tails are presumed to bind to membranous compartments, which would be moved relative to actin filaments. As part of the intermicrovillar adhesion complex/IMAC plays a role in epithelial brush border differentiation, controlling microvilli organization and length. May link the complex to the actin core bundle of microvilli. This is Unconventional myosin-VIIb from Homo sapiens (Human).